We begin with the raw amino-acid sequence, 181 residues long: Isopentenyl-diphosphate Delta-isomerase (181 aa).

2 residues coordinate Mn(2+): His25 and His32. Positions 30 to 164 constitute a Nudix hydrolase domain; sequence PLHLAFSCWL…PWAFSPWMVM (135 aa). Residue Cys67 is part of the active site. Residue His69 participates in Mn(2+) binding. Glu87 serves as a coordination point for Mg(2+). Glu114 and Glu116 together coordinate Mn(2+). Glu116 is a catalytic residue.

The protein belongs to the IPP isomerase type 1 family. As to quaternary structure, homodimer. Mg(2+) is required as a cofactor. It depends on Mn(2+) as a cofactor.

It localises to the cytoplasm. The enzyme catalyses isopentenyl diphosphate = dimethylallyl diphosphate. It functions in the pathway isoprenoid biosynthesis; dimethylallyl diphosphate biosynthesis; dimethylallyl diphosphate from isopentenyl diphosphate: step 1/1. In terms of biological role, catalyzes the 1,3-allylic rearrangement of the homoallylic substrate isopentenyl (IPP) to its highly electrophilic allylic isomer, dimethylallyl diphosphate (DMAPP). The protein is Isopentenyl-diphosphate Delta-isomerase of Salmonella paratyphi B (strain ATCC BAA-1250 / SPB7).